Reading from the N-terminus, the 891-residue chain is Alanine--tRNA ligase (891 aa).

Histidine 564, histidine 568, cysteine 677, and histidine 681 together coordinate Zn(2+).

This sequence belongs to the class-II aminoacyl-tRNA synthetase family. It depends on Zn(2+) as a cofactor.

Its subcellular location is the cytoplasm. The catalysed reaction is tRNA(Ala) + L-alanine + ATP = L-alanyl-tRNA(Ala) + AMP + diphosphate. Catalyzes the attachment of alanine to tRNA(Ala) in a two-step reaction: alanine is first activated by ATP to form Ala-AMP and then transferred to the acceptor end of tRNA(Ala). Also edits incorrectly charged Ser-tRNA(Ala) and Gly-tRNA(Ala) via its editing domain. The chain is Alanine--tRNA ligase from Rhodopseudomonas palustris (strain HaA2).